Consider the following 606-residue polypeptide: Mitogen-activated protein kinase kinase kinase 7 (606 aa).

The interaction with MAPK8IP1 stretch occupies residues 1 to 300; the sequence is MSTASAASSS…FPGADEPLQY (300 aa). Residues 36–291 form the Protein kinase domain; sequence IEVEEVVGRG…KIMTHLMRYF (256 aa). Residues 42–50 and K63 contribute to the ATP site; that span reads VGRGAFGVV. K72 is covalently cross-linked (Glycyl lysine isopeptide (Lys-Gly) (interchain with G-Cter in ubiquitin)). The Proton acceptor role is filled by D156. A Glycyl lysine isopeptide (Lys-Gly) (interchain with G-Cter in ubiquitin) cross-link involves residue K158. T184 and T187 each carry (Microbial infection) O-acetylthreonine; by Yersinia YopJ; alternate. A phosphothreonine; by autocatalysis; alternate mark is found at T184 and T187. Residue S192 is modified to Phosphoserine; by autocatalysis. A Glycyl lysine isopeptide (Lys-Gly) (interchain with G-Cter in ubiquitin) cross-link involves residue K209. The segment at 301–338 is disordered; it reads PCQYSDEGQSNSATSTGSFMDIASTNTSNKSDTNMEQV. Positions 306 to 338 are enriched in polar residues; sequence DEGQSNSATSTGSFMDIASTNTSNKSDTNMEQV. T341 is modified ((Microbial infection) O-acetylthreonine; by Yersinia YopJ; alternate). The disordered stretch occupies residues 354–391; the sequence is KNQAKQQSESGRLSLGASRGSSVESLPPTSEGKRMSAD. A compositionally biased stretch (low complexity) spans 361-375; sequence SESGRLSLGASRGSS. Phosphoserine is present on residues S367, S389, and S439. A compositionally biased stretch (polar residues) spans 443–452; sequence LTVTGTEPGQ. The interval 443-493 is disordered; it reads LTVTGTEPGQVSSRSSSPSVRMITTSGPTSEKPTRSHPWTPDDSTDTNGSD. 3 positions are modified to (Microbial infection) O-acetylthreonine; by Yersinia YopJ; alternate: T444, T446, and T448. Positions 453–463 are enriched in low complexity; the sequence is VSSRSSSPSVR. At S455 the chain carries Phosphoserine. The segment covering 464–473 has biased composition (polar residues); sequence MITTSGPTSE. The residue at position 467 (T467) is a (Microbial infection) O-acetylthreonine; by Yersinia YopJ; alternate.

It belongs to the protein kinase superfamily. STE Ser/Thr protein kinase family. MAP kinase kinase kinase subfamily. Can form homodimer. Binds both upstream activators and downstream substrates in multimolecular complexes. Interacts with TAB1/MAP3K7IP1, TAB2/MAP3K7IP2 and TAB3/MAP3K7IP3. Identified in the TRIKA2 complex composed of MAP3K7/TAK1, TAB1/MAP3K7IP1 and TAB2/MAP3K7IP2. Interacts with PPM1L and PPM1B/PP2CB. Interaction with PP2A and PPP6C leads to its repressed activity. Interacts with TRAF6 and TAB1/MAP3K7IP1; during IL-1 signaling. Interacts with TAOK1 and TAOK2; interaction with TAOK2 interferes with MAP3K7 interaction with IKKA, thus preventing NF-kappa-B activation. Interacts with DYNC2I2 (via WD domains). Interacts with CYLD and RBCK1. Interacts with TGFBR1; induces MAP3K7/TAK1 activation by TRAF6. Interacts with MAPK8IP1 and SMAD6. Interacts with isoform 1 of VRK2. Interacts with DAB2; the interaction is induced by TGF-beta stimulation and may mediate TGF-beta stimulated JNK activation. Interacts with TRIM5. Part of a complex containing ITCH, NDFIP1 and MAP3K7. Interacts with IFIT5; the interaction synergizes the recruitment of IKK to MAP3K7 and enhances IKK phosphorylation. Interacts with PLEKHM1 (via N- and C-terminus). Interacts with TRIM8. Found in a complex with SH3RF1, RAC2, MAP2K7/MKK7, MAPK8IP1/JIP1, MAPK8/JNK1 and MAPK9/JNK2. Interacts with SASH1. Interacts with RIPK1. In terms of assembly, (Microbial infection) Interacts with herpes simplex virus 2 protein US2; this interaction induces MAP3K7 phosphorylation and subsequent activation. The cofactor is Mg(2+). Post-translationally, association with TAB1/MAP3K7IP1 promotes autophosphorylation at Ser-192 and subsequent activation. Association with TAB2/MAP3K7IP2, itself associated with free unanchored Lys-63 polyubiquitin chain, promotes autophosphorylation and subsequent activation of MAP3K7. Dephosphorylation at Ser-192 by PPM1B/PP2CB and at Thr-187 by PP2A and PPP6C leads to inactivation. 'Lys-48'-linked polyubiquitination at Lys-72 is induced by TNFalpha, and leads to proteasomal degradation. Undergoes 'Lys-48'-linked polyubiquitination catalyzed by ITCH. Requires 'Lys-63'-linked polyubiquitination for autophosphorylation and subsequent activation. 'Lys-63'-linked ubiquitination does not lead to proteasomal degradation. Deubiquitinated by CYLD, a protease that selectively cleaves 'Lys-63'-linked ubiquitin chains. Deubiquitinated by Y.enterocolitica YopP. Deubiquitinated by USP19; leading to negative regulation of TNF-alpha- and IL-1beta-triggered NF-kappa-B activation. In terms of processing, (Microbial infection) Cleaved and inactivated by the proteases 3C of coxsackievirus A16 and human enterovirus D68, allowing the virus to disrupt TRAF6-triggered NF-kappa-B induction. Post-translationally, (Microbial infection) Acetylation of Thr-184 and Thr-187 by Yersinia YopJ prevents phosphorylation and activation, thus blocking the MAPK signaling pathway. In terms of tissue distribution, isoform 1A is the most abundant in ovary, skeletal muscle, spleen and blood mononuclear cells. Isoform 1B is highly expressed in brain, kidney and small intestine. Isoform 1C is the major form in prostate. Isoform 1D is the less abundant form.

The protein localises to the cytoplasm. It is found in the cell membrane. The enzyme catalyses L-seryl-[protein] + ATP = O-phospho-L-seryl-[protein] + ADP + H(+). It catalyses the reaction L-threonyl-[protein] + ATP = O-phospho-L-threonyl-[protein] + ADP + H(+). With respect to regulation, activated by pro-inflammatory cytokines and in response to physical and chemical stresses, including osmotic stress, oxidative stress, arsenic and ultraviolet light irradiation. Activated by 'Lys-63'-linked polyubiquitination and by autophosphorylation. Association with TAB1/MAP3K7IP1 and TAB2/MAP3K7IP2 promotes activation through autophosphorylation, whereas PPM1B/PP2CB, PP2A and PPP6C dephosphorylation leads to inactivation. Ceramides are also able to activate MAP3K7/TAK1. Its function is as follows. Serine/threonine kinase which acts as an essential component of the MAP kinase signal transduction pathway. Plays an important role in the cascades of cellular responses evoked by changes in the environment. Mediates signal transduction of TRAF6, various cytokines including interleukin-1 (IL-1), transforming growth factor-beta (TGFB), TGFB-related factors like BMP2 and BMP4, toll-like receptors (TLR), tumor necrosis factor receptor CD40 and B-cell receptor (BCR). Once activated, acts as an upstream activator of the MKK/JNK signal transduction cascade and the p38 MAPK signal transduction cascade through the phosphorylation and activation of several MAP kinase kinases like MAP2K1/MEK1, MAP2K3/MKK3, MAP2K6/MKK6 and MAP2K7/MKK7. These MAP2Ks in turn activate p38 MAPKs and c-jun N-terminal kinases (JNKs); both p38 MAPK and JNK pathways control the transcription factors activator protein-1 (AP-1). Independently of MAP2Ks and p38 MAPKs, acts as a key activator of NF-kappa-B by promoting activation of the I-kappa-B-kinase (IKK) core complex. Mechanistically, recruited to polyubiquitin chains of RIPK2 and IKBKG/NEMO via TAB2/MAP3K7IP2 and TAB3/MAP3K7IP3, and catalyzes phosphorylation and activation of IKBKB/IKKB component of the IKK complex, leading to NF-kappa-B activation. In osmotic stress signaling, plays a major role in the activation of MAPK8/JNK1, but not that of NF-kappa-B. Promotes TRIM5 capsid-specific restriction activity. Phosphorylates RIPK1 at 'Ser-321' which positively regulates RIPK1 interaction with RIPK3 to promote necroptosis but negatively regulates RIPK1 kinase activity and its interaction with FADD to mediate apoptosis. Phosphorylates STING1 in response to cGAMP-activation, promoting association between STEEP1 and STING1 and STING1 translocation to COPII vesicles. This chain is Mitogen-activated protein kinase kinase kinase 7, found in Homo sapiens (Human).